The chain runs to 54 residues: Light-harvesting protein B-880 beta chain (54 aa).

The Cytoplasmic segment spans residues 1–20 (AEDRSSLSGVSDAEAKEFHA). The a bacteriochlorophyll site is built by histidine 19 and histidine 37. A helical membrane pass occupies residues 21 to 43 (LFVSSFTAFIVIAVLAHVLAWAW). Over 44 to 54 (RPWIPGPKGWA) the chain is Periplasmic.

Belongs to the antenna complex beta subunit family. The core complex is formed by different alpha and beta chains, binding bacteriochlorophyll molecules, and arranged most probably in tetrameric structures disposed around the reaction center. The non-pigmented gamma chains may constitute additional components.

The protein localises to the cell inner membrane. Functionally, antenna complexes are light-harvesting systems, which transfer the excitation energy to the reaction centers. This Rhodoblastus acidophilus (Rhodopseudomonas acidophila) protein is Light-harvesting protein B-880 beta chain.